Reading from the N-terminus, the 239-residue chain is Purine nucleoside phosphorylase DeoD-type (239 aa).

Histidine 5 is an a purine D-ribonucleoside binding site. Phosphate-binding positions include glycine 21, arginine 25, arginine 44, and 88–91 (RVGS). Residues 180-182 (EME) and 204-205 (SD) contribute to the a purine D-ribonucleoside site. Aspartate 205 (proton donor) is an active-site residue.

It belongs to the PNP/UDP phosphorylase family. As to quaternary structure, homohexamer; trimer of homodimers.

It carries out the reaction a purine D-ribonucleoside + phosphate = a purine nucleobase + alpha-D-ribose 1-phosphate. The enzyme catalyses a purine 2'-deoxy-D-ribonucleoside + phosphate = a purine nucleobase + 2-deoxy-alpha-D-ribose 1-phosphate. In terms of biological role, catalyzes the reversible phosphorolytic breakdown of the N-glycosidic bond in the beta-(deoxy)ribonucleoside molecules, with the formation of the corresponding free purine bases and pentose-1-phosphate. The chain is Purine nucleoside phosphorylase DeoD-type from Yersinia pseudotuberculosis serotype O:1b (strain IP 31758).